The sequence spans 252 residues: Indole-3-glycerol phosphate synthase (252 aa).

Belongs to the TrpC family.

The catalysed reaction is 1-(2-carboxyphenylamino)-1-deoxy-D-ribulose 5-phosphate + H(+) = (1S,2R)-1-C-(indol-3-yl)glycerol 3-phosphate + CO2 + H2O. Its pathway is amino-acid biosynthesis; L-tryptophan biosynthesis; L-tryptophan from chorismate: step 4/5. This is Indole-3-glycerol phosphate synthase from Listeria monocytogenes serovar 1/2a (strain ATCC BAA-679 / EGD-e).